The chain runs to 260 residues: Histidine-binding periplasmic protein (260 aa).

A signal peptide spans 1-22 (MKKLVLSLSLVLAFSSATAAFA). A disulfide bond links C60 and C67. L-histidine contacts are provided by S91, S92, S94, R99, T143, and D183.

It belongs to the bacterial solute-binding protein 3 family. As to quaternary structure, the complex is composed of two ATP-binding proteins (HisP), two transmembrane proteins (HisM and HisQ) and a solute-binding protein (HisJ).

It localises to the periplasm. Functionally, part of the ABC transporter complex HisPMQJ involved in histidine transport. Binds histidine. Interacts with HisQMP and stimulates ATPase activity of HisP, which results in histidine translocation. This Escherichia coli O157:H7 protein is Histidine-binding periplasmic protein (hisJ).